We begin with the raw amino-acid sequence, 180 residues long: Transcriptional repressor NrdR (180 aa).

Residues 3-34 fold into a zinc finger; it reads CPYCQNTSSRVLESRSTEAGQSIRRRRECLQC. The ATP-cone domain occupies 49-139; sequence ISVLKKDKSK…VYGEFKGITD (91 aa). The interval 148 to 180 is disordered; it reads QQEERESSSSPEWSDAGEEATVIEDSSQVMASS. Residues 171-180 show a composition bias toward polar residues; the sequence is EDSSQVMASS.

It belongs to the NrdR family. Zn(2+) serves as cofactor.

Its function is as follows. Negatively regulates transcription of bacterial ribonucleotide reductase nrd genes and operons by binding to NrdR-boxes. This is Transcriptional repressor NrdR from Gloeothece citriformis (strain PCC 7424) (Cyanothece sp. (strain PCC 7424)).